A 109-amino-acid chain; its full sequence is ATPase inhibitor, mitochondrial (109 aa).

A mitochondrion-targeting transit peptide spans 1-22; that stretch reads MAGSSSLLRAGIRNVLLMQMRR. Residues 27-56 are N-terminal inhibitory region; the sequence is LGELGKGAGKGGGGGGSVREAGGAFGKRQA. The segment at 27-109 is disordered; that stretch reads LGELGKGAGK…KSKIKKLNDD (83 aa). Over residues 30 to 43 the composition is skewed to gly residues; the sequence is LGKGAGKGGGGGGS. 2 stretches are compositionally biased toward basic and acidic residues: residues 55–69 and 77–98; these read QAAE…KEQE and HHEE…EIER. Residues 71 to 109 adopt a coiled-coil conformation; sequence IASLRKHHEEEIRHHKGEIERLQKEIERHKSKIKKLNDD. An antiparallel alpha-helical coiled coil region region spans residues 78 to 109; sequence HEEEIRHHKGEIERLQKEIERHKSKIKKLNDD. The segment covering 99-109 has biased composition (basic residues); sequence HKSKIKKLNDD.

Belongs to the ATPase inhibitor family. As to quaternary structure, homodimer; represents the active form and is present at a pH value below 6.5. Homotetramer; represents the inactive form and is present at a pH value above 7.0.

It localises to the mitochondrion. Endogenous F(1)F(o)-ATPase inhibitor limiting ATP depletion when the mitochondrial membrane potential falls below a threshold and the F(1)F(o)-ATP synthase starts hydrolyzing ATP to pump protons out of the mitochondrial matrix. Required to avoid the consumption of cellular ATP when the F(1)F(o)-ATP synthase enzyme acts as an ATP hydrolase. Indirectly acts as a regulator of heme synthesis in erythroid tissues: regulates heme synthesis by modulating the mitochondrial pH and redox potential, allowing fech to efficiently catalyze the incorporation of iron into protoporphyrin IX to produce heme. This Xenopus tropicalis (Western clawed frog) protein is ATPase inhibitor, mitochondrial.